A 345-amino-acid chain; its full sequence is tRNA N6-adenosine threonylcarbamoyltransferase (345 aa).

Residues histidine 109 and histidine 113 each contribute to the Fe cation site. Residues 136–140 (TVSGG), aspartate 169, glycine 182, aspartate 186, and asparagine 284 contribute to the substrate site. Aspartate 312 serves as a coordination point for Fe cation.

This sequence belongs to the KAE1 / TsaD family. The cofactor is Fe(2+).

The protein resides in the cytoplasm. It carries out the reaction L-threonylcarbamoyladenylate + adenosine(37) in tRNA = N(6)-L-threonylcarbamoyladenosine(37) in tRNA + AMP + H(+). Required for the formation of a threonylcarbamoyl group on adenosine at position 37 (t(6)A37) in tRNAs that read codons beginning with adenine. Is involved in the transfer of the threonylcarbamoyl moiety of threonylcarbamoyl-AMP (TC-AMP) to the N6 group of A37, together with TsaE and TsaB. TsaD likely plays a direct catalytic role in this reaction. The chain is tRNA N6-adenosine threonylcarbamoyltransferase from Prosthecochloris aestuarii (strain DSM 271 / SK 413).